Consider the following 320-residue polypeptide: tRNA dimethylallyltransferase (320 aa).

10–17 (GPTASGKT) lines the ATP pocket. Position 12–17 (12–17 (TASGKT)) interacts with substrate. Interaction with substrate tRNA stretches follow at residues 35 to 38 (DSAL), 159 to 163 (QRIQR), and 241 to 246 (RCVGYR).

It belongs to the IPP transferase family. Monomer. Requires Mg(2+) as cofactor.

The catalysed reaction is adenosine(37) in tRNA + dimethylallyl diphosphate = N(6)-dimethylallyladenosine(37) in tRNA + diphosphate. Functionally, catalyzes the transfer of a dimethylallyl group onto the adenine at position 37 in tRNAs that read codons beginning with uridine, leading to the formation of N6-(dimethylallyl)adenosine (i(6)A). The chain is tRNA dimethylallyltransferase from Aromatoleum aromaticum (strain DSM 19018 / LMG 30748 / EbN1) (Azoarcus sp. (strain EbN1)).